The primary structure comprises 959 residues: E3 ubiquitin-protein ligase arkadia-B (959 aa).

Polar residues predominate over residues 51–66; sequence CSDTNKQQSDLNSNGT. 3 disordered regions span residues 51–171, 189–212, and 225–271; these read CSDT…VSSL, RKRFVKNVSSQRTQKQKERMMLQR, and LLPS…SGGM. Residues 112–131 show a composition bias toward low complexity; it reads SSFSDCISSPSSSSHFGDSD. The span at 142–156 shows a compositional bias: polar residues; the sequence is PLSSVNSTPRTQSAR. The span at 228 to 246 shows a compositional bias: low complexity; it reads SSSSSSENDLSSESSSSSS. Residues 256–267 show a composition bias toward polar residues; sequence TGENRQDGTTLP. The short motif at 275–279 is the SUMO interaction motif 1 (SIM) element; it reads VVVIE. The SUMO interaction motif 2 (SIM) motif lies at 300–306; that stretch reads EVEIVTV. Residues 318–341 are disordered; that stretch reads HPRSHWGQNSQSGRTQEQRTRNRV. The span at 323–332 shows a compositional bias: polar residues; that stretch reads WGQNSQSGRT. The SUMO interaction motif 3 (SIM) motif lies at 355 to 359; it reads VVDLT. Polar residues predominate over residues 370 to 397; the sequence is TTSGRVESQPVSIVSSLTSTSEPASDSM. 4 disordered regions span residues 370-399, 475-499, 615-649, and 661-680; these read TTSGRVESQPVSIVSSLTSTSEPASDSMSG, HFPHHHHHHHHSSHPGVPLSPSFRD, PRPLHHQTSSCPHSNSASQPPPPPPPPPPPPMDYV, and PSLTSTHAVPPPPPSHHLSA. The span at 475–487 shows a compositional bias: basic residues; it reads HFPHHHHHHHHSS. Over residues 620–632 the composition is skewed to polar residues; that stretch reads HQTSSCPHSNSAS. Residues 633–646 show a composition bias toward pro residues; that stretch reads QPPPPPPPPPPPPM. The interval 872 to 874 is ubiquitin binding; that stretch reads YPH. Cys-907 and Cys-910 together coordinate Zn(2+). An RING-type; atypical zinc finger spans residues 907–948; sequence CTICLSILEEGEDVRRLPCMHLFHQVCVDQWLITNKKCPICR. The ubiquitin binding stretch occupies residues 922-926; the sequence is RLPCM. Zn(2+) contacts are provided by His-930 and Cys-933.

The protein belongs to the Arkadia family. Monomer.

It localises to the nucleus. Its subcellular location is the cytoplasm. The protein localises to the PML body. The catalysed reaction is S-ubiquitinyl-[E2 ubiquitin-conjugating enzyme]-L-cysteine + [acceptor protein]-L-lysine = [E2 ubiquitin-conjugating enzyme]-L-cysteine + N(6)-ubiquitinyl-[acceptor protein]-L-lysine.. It functions in the pathway protein modification; protein ubiquitination. With respect to regulation, binds free ubiquitin non-covalently via its RING-type zinc finger. Ubiquitin-binding leads to enhance the E3 ubiquitin-protein ligase activity by stabilizing the ubiquitin-conjugating enzyme E2 (donor ubiquitin) in the 'closed' conformation and activating ubiquitin transfer. E3 ubiquitin-protein ligase required for mesoderm patterning during embryonic development. Acts as an enhancer of the transcriptional responses of the smad2/smad3 effectors, which are activated downstream of BMP. Acts by mediating ubiquitination and degradation of SMAD inhibitors such as smad7, inducing their proteasomal degradation and thereby enhancing the transcriptional activity of TGF-beta and BMP. Specifically binds polysumoylated chains via SUMO interaction motifs (SIMs) and mediates ubiquitination of sumoylated substrates. The regulation of the BMP-SMAD signaling is however independent of sumoylation and is not dependent of SUMO interaction motifs (SIMs). The polypeptide is E3 ubiquitin-protein ligase arkadia-B (rnf111-b) (Xenopus laevis (African clawed frog)).